Reading from the N-terminus, the 1248-residue chain is Probable serine/threonine-protein kinase DDB_G0278509 (1248 aa).

5 disordered regions span residues 1 to 26 (MSKV…NGEY), 40 to 61 (SVNG…EEDY), 100 to 125 (QSYK…DHLE), 180 to 220 (QNNN…TKNN), and 235 to 338 (SIDS…NNNK). Residues 102–117 (YKLSNSGESMNRSINQ) are compositionally biased toward polar residues. Low complexity predominate over residues 181 to 216 (NNNNNNSNSNSNSNSNSNNNNNNNNNNNNNNNNNNN). LRR repeat units follow at residues 386 to 407 (SSTE…DEKE), 411 to 432 (GYKI…AFTN), 435 to 457 (NLEQ…EFLK), 458 to 480 (HLTI…GNLS), 481 to 502 (FLRE…GNLY), 503 to 524 (NLKK…CVEP), 527 to 548 (QLQT…TTTT), 572 to 593 (NLKQ…LRHL), 595 to 616 (KLHS…VVAS), 619 to 641 (RLAK…NNLS), 642 to 663 (SLIE…ICYL), 665 to 687 (NLKK…GFLT), and 688 to 708 (KLVD…SFLK). The interval 825–873 (YPFQKLDPIPQSLYSSSNPRSHTESDIQKLKNNDETITTTNSSISTTSS) is disordered. The segment covering 845 to 858 (SHTESDIQKLKNND) has biased composition (basic and acidic residues). Residues 860–873 (TITTTNSSISTTSS) are compositionally biased toward low complexity. Positions 946 to 1239 (IQFFNLIGQG…SIYHRLENLM (294 aa)) constitute a Protein kinase domain. ATP contacts are provided by residues 952–960 (IGQGGFSKV) and Lys973. The active-site Proton acceptor is Asp1069. Residues 1106-1135 (NNTNNTATSSTTTSSANGANSISNNNNNGT) are disordered.

Belongs to the protein kinase superfamily. TKL Ser/Thr protein kinase family.

It catalyses the reaction L-seryl-[protein] + ATP = O-phospho-L-seryl-[protein] + ADP + H(+). The enzyme catalyses L-threonyl-[protein] + ATP = O-phospho-L-threonyl-[protein] + ADP + H(+). This chain is Probable serine/threonine-protein kinase DDB_G0278509, found in Dictyostelium discoideum (Social amoeba).